Consider the following 218-residue polypeptide: Eukaryotic translation initiation factor 4E-1 (218 aa).

The span at 1-11 shows a compositional bias: basic and acidic residues; it reads MQTEQPPKESQ. Disordered stretches follow at residues 1-20 and 198-218; these read MQTE…SEPQ and FSAH…RMSV. Polar residues predominate over residues 206–218; sequence KSGSTRAKTRMSV.

The protein belongs to the eukaryotic initiation factor 4E family. As to quaternary structure, eIF4F is a multi-subunit complex, the composition of which varies with external and internal environmental conditions. It is composed of at least eIF4A, eIF4E and eIF4G. eIF4E is also known to interact with other partners.

Functionally, recognizes and binds the 7-methylguanosine-containing mRNA cap during an early step in the initiation of protein synthesis and facilitates ribosome binding by inducing the unwinding of the mRNAs secondary structures. This is Eukaryotic translation initiation factor 4E-1 (tif451) from Schizosaccharomyces pombe (strain 972 / ATCC 24843) (Fission yeast).